The following is a 220-amino-acid chain: Ras-related protein Rab-3A (220 aa).

Residues Ser31, Ser32, Val33, Gly34, Lys35, Thr36, Ser37, Thr48, Pro49, Ser53, and Thr54 each contribute to the GTP site. Thr36 is a Mg(2+) binding site. The Switch 1 motif lies at 49–58; the sequence is PAFVSTVGID. Mg(2+) is bound by residues Thr54 and Asp77. Gly80 serves as a coordination point for GTP. Residues 80–96 carry the Switch 2 motif; sequence GQERYRTITTAYYRGAM. Thr86 is modified (phosphothreonine). GTP-binding residues include Asn135, Lys136, Asp138, Ala166, and Lys167. Phosphoserine occurs at positions 188 and 190. The disordered stretch occupies residues 194–220; that stretch reads ADPAVTGAKQGPQLTDQQAPPHQDCAC. Residues Cys218 and Cys220 are each lipidated (S-geranylgeranyl cysteine). Position 220 is a cysteine methyl ester (Cys220).

Belongs to the small GTPase superfamily. Rab family. In terms of assembly, interacts with RIMS1 and RIMS2. Interacts with Rabphilin-3A/RPH3A and Rab effector Noc2/RPH3AL. Interacts with SYTL4. Interacts with RAB3IP. Interacts with SGSM1 and SGSM3. Interacts with SYT1. Interacts with MYH9; this interaction is essential for lysosome exocytosis and plasma membrane repair. Interacts with STXBP1; this interaction promotes RAB3A dissociation from the vesicle membrane. Interacts with SNCA. Interacts with GDI1, GDI2, CHM and CHML; phosphorylation at Thr-86 disrupts these interactions. Interacts with MADD (via uDENN domain); the GTP-bound form is preferred for interaction. Mg(2+) serves as cofactor. In terms of processing, phosphorylation of Thr-86 in the switch II region by LRRK2 prevents the association of RAB regulatory proteins, including CHM, CHML and RAB GDP dissociation inhibitors GDI1 and GDI2. In terms of tissue distribution, specifically expressed in brain.

The protein localises to the cytoplasm. The protein resides in the cytosol. Its subcellular location is the lysosome. It is found in the cytoplasmic vesicle. It localises to the secretory vesicle. The protein localises to the cell projection. The protein resides in the axon. Its subcellular location is the cell membrane. It is found in the presynapse. It localises to the postsynapse. The catalysed reaction is GTP + H2O = GDP + phosphate + H(+). Its activity is regulated as follows. Regulated by guanine nucleotide exchange factors (GEFs) including RAB3IL1 and MADD which promote the exchange of bound GDP for free GTP. Regulated by GTPase activating proteins (GAPs) including RAB3GAP1 and TBC1D10B which increase the GTP hydrolysis activity. Inhibited by GDP dissociation inhibitors (GDIs) which prevent Rab-GDP dissociation. Its function is as follows. The small GTPases Rab are key regulators of intracellular membrane trafficking, from the formation of transport vesicles to their fusion with membranes. Rabs cycle between an inactive GDP-bound form and an active GTP-bound form that is able to recruit to membranes different sets of downstream effectors directly responsible for vesicle formation, movement, tethering and fusion. RAB3A plays a central role in regulated exocytosis and secretion. Controls the recruitment, tethering and docking of secretory vesicles to the plasma membrane. Upon stimulation, switches to its active GTP-bound form, cycles to vesicles and recruits effectors such as RIMS1, RIMS2, Rabphilin-3A/RPH3A, RPH3AL or SYTL4 to help the docking of vesicules onto the plasma membrane. Upon GTP hydrolysis by GTPase-activating protein, dissociates from the vesicle membrane allowing the exocytosis to proceed. Stimulates insulin secretion through interaction with RIMS2 or RPH3AL effectors in pancreatic beta cells. Regulates calcium-dependent lysosome exocytosis and plasma membrane repair (PMR) via the interaction with 2 effectors, SYTL4 and myosin-9/MYH9. Acts as a positive regulator of acrosome content secretion in sperm cells by interacting with RIMS1. Also plays a role in the regulation of dopamine release by interacting with synaptotagmin I/SYT. In Bos taurus (Bovine), this protein is Ras-related protein Rab-3A (RAB3A).